The chain runs to 130 residues: Small ribosomal subunit protein uS11c (130 aa).

Belongs to the universal ribosomal protein uS11 family. Part of the 30S ribosomal subunit.

Its subcellular location is the plastid. The protein localises to the chloroplast. This chain is Small ribosomal subunit protein uS11c, found in Pyropia yezoensis (Susabi-nori).